Here is a 337-residue protein sequence, read N- to C-terminus: Probable phospholipase A1 magnifin (337 aa).

The N-terminal stretch at 1 to 21 (MNLKYLLLFFCLVQVLHYCYS) is a signal peptide. A propeptide spanning residues 22-33 (HGDPSLSNELDR) is cleaved from the precursor. A disulfide bridge links C39 with C123. The Nucleophile role is filled by S173. D201 functions as the Charge relay system in the catalytic mechanism. 2 cysteine pairs are disulfide-bonded: C212–C217 and C255–C264. H266 serves as the catalytic Charge relay system. Cystine bridges form between C281-C305, C282-C330, and C298-C303.

The protein belongs to the AB hydrolase superfamily. Lipase family. Expressed by the venom gland.

It is found in the secreted. It catalyses the reaction a 1,2-diacyl-sn-glycero-3-phosphocholine + H2O = a 2-acyl-sn-glycero-3-phosphocholine + a fatty acid + H(+). Catalyzes the hydrolysis of phosphatidylcholine with phospholipase A1 activity. May act as an allergen and induce hemolytic activity. In vivo, induces dose-dependent platelet aggregation (nanomolar concentration) and induces thrombosis. This Vespa magnifica (Hornet) protein is Probable phospholipase A1 magnifin.